Consider the following 271-residue polypeptide: Ferric vulnibactin reductase VuuB (271 aa).

Residues 8–131 enclose the FAD-binding FR-type domain; sequence VYPMLLDFVR…IGPAGPDPLI (124 aa).

The protein belongs to the SIP oxidoreductase family. Monomer. Requires FAD as cofactor.

It is found in the cytoplasm. The catalysed reaction is 2 a Fe(II)-siderophore + NAD(+) + H(+) = 2 a Fe(III)-siderophore + NADH. Its function is as follows. Ferric-siderophore reductase involved in iron removal from the siderophores after their transport into the cell. Acts as a major ferric-vulnibactin reductase catalyzing the reduction of Fe(3+)-vulnibactin, a catecholate siderophore synthesized by V.vulnificus. Catalyzes reduction of Fe(3+)-aerobactin, a citrate-hydroxamate siderophore produced by other bacteria, in the absence of IutB. Catalyzes reduction of Fe(3+)-vibriobactin in vitro. No activity with ferrioxamine B or Fe(3+)-enterobactin. Catalyzes reduction of ferric chelating compounds Fe(3+)-nitrilotriacetic acid (NTA), Fe(3+)-citrate and Fe(3+)-EDTA as well as non-complexed FeCl3 in the presence of NADH as its electron donor and FAD as its cofactor in vitro. Highest activity with Fe(3+)-NTA as electron acceptor. The chain is Ferric vulnibactin reductase VuuB from Vibrio vulnificus.